A 250-amino-acid chain; its full sequence is Triosephosphate isomerase, cytosolic (250 aa).

Residues Asn-1 and Lys-3 each contribute to the substrate site. The active-site Electrophile is the His-87. The Proton acceptor role is filled by Glu-160.

The protein belongs to the triosephosphate isomerase family. As to quaternary structure, homodimer.

It localises to the cytoplasm. The enzyme catalyses D-glyceraldehyde 3-phosphate = dihydroxyacetone phosphate. The protein operates within carbohydrate biosynthesis; gluconeogenesis. It participates in carbohydrate degradation; glycolysis; D-glyceraldehyde 3-phosphate from glycerone phosphate: step 1/1. This is Triosephosphate isomerase, cytosolic (TPI1) from Gracilaria gracilis (Red alga).